Reading from the N-terminus, the 549-residue chain is Lipase 5 (549 aa).

Positions 1–15 (MKLALALSLIASVAA) are cleaved as a signal peptide. A disulfide bridge connects residues cysteine 75 and cysteine 112. Residue serine 224 is the Acyl-ester intermediate of the active site. A disulfide bond links cysteine 283 and cysteine 292. Asparagine 329 carries an N-linked (GlcNAc...) asparagine glycan. The active-site Charge relay system is glutamate 356. Asparagine 366 carries N-linked (GlcNAc...) asparagine glycosylation. Histidine 464 acts as the Charge relay system in catalysis.

Belongs to the type-B carboxylesterase/lipase family.

It catalyses the reaction a triacylglycerol + H2O = a diacylglycerol + a fatty acid + H(+). This is Lipase 5 (LIP5) from Diutina rugosa (Yeast).